A 371-amino-acid chain; its full sequence is tRNA-specific 2-thiouridylase MnmA (371 aa).

Residues 16–23 (GMSGGVDS) and Met-42 contribute to the ATP site. The tract at residues 102–104 (NPD) is interaction with target base in tRNA. Residue Cys-107 is the Nucleophile of the active site. Cys-107 and Cys-204 are disulfide-bonded. Gly-132 is a binding site for ATP. The segment at 154–156 (KDQ) is interaction with tRNA. Catalysis depends on Cys-204, which acts as the Cysteine persulfide intermediate. Residues 316–317 (RY) are interaction with tRNA.

This sequence belongs to the MnmA/TRMU family.

The protein resides in the cytoplasm. It carries out the reaction S-sulfanyl-L-cysteinyl-[protein] + uridine(34) in tRNA + AH2 + ATP = 2-thiouridine(34) in tRNA + L-cysteinyl-[protein] + A + AMP + diphosphate + H(+). Catalyzes the 2-thiolation of uridine at the wobble position (U34) of tRNA, leading to the formation of s(2)U34. The chain is tRNA-specific 2-thiouridylase MnmA from Shewanella halifaxensis (strain HAW-EB4).